The following is a 266-amino-acid chain: HLA class II histocompatibility antigen, DR beta 5 chain (266 aa).

A signal peptide spans methionine 1–alanine 29. Residues glycine 30–valine 124 form a beta-1 region. The Extracellular portion of the chain corresponds to glycine 30 to lysine 227. Disulfide bonds link cysteine 44/cysteine 108 and cysteine 146/cysteine 202. Asparagine 48 carries an N-linked (GlcNAc...) asparagine glycan. The beta-2 stretch occupies residues glutamate 125–lysine 227. One can recognise an Ig-like C1-type domain in the interval proline 126–threonine 214. Residues methionine 228–isoleucine 248 form a helical membrane-spanning segment. Topologically, residues tyrosine 249–serine 266 are cytoplasmic.

The protein belongs to the MHC class II family. In terms of assembly, heterodimer of an alpha and a beta subunit; also referred as MHC class II molecule. In the endoplasmic reticulum (ER) it forms a heterononamer; 3 MHC class II molecules bind to a CD74 homotrimer (also known as invariant chain or HLA class II histocompatibility antigen gamma chain). In the endosomal/lysosomal system; CD74 undergoes sequential degradation by various proteases; leaving a small fragment termed CLIP on each MHC class II molecule. MHC class II molecule interacts with HLA_DM, and HLA_DO in B-cells, in order to release CLIP and facilitate the binding of antigenic peptides. Post-translationally, ubiquitinated by MARCH1 and MARCH8 at Lys-254 leading to down-regulation of MHC class II.

Its subcellular location is the cell membrane. The protein resides in the endoplasmic reticulum membrane. The protein localises to the golgi apparatus. It localises to the trans-Golgi network membrane. It is found in the endosome membrane. Its subcellular location is the lysosome membrane. The protein resides in the late endosome membrane. In terms of biological role, binds peptides derived from antigens that access the endocytic route of antigen presenting cells (APC) and presents them on the cell surface for recognition by the CD4 T-cells. The peptide binding cleft accommodates peptides of 10-30 residues. The peptides presented by MHC class II molecules are generated mostly by degradation of proteins that access the endocytic route, where they are processed by lysosomal proteases and other hydrolases. Exogenous antigens that have been endocytosed by the APC are thus readily available for presentation via MHC II molecules, and for this reason this antigen presentation pathway is usually referred to as exogenous. As membrane proteins on their way to degradation in lysosomes as part of their normal turn-over are also contained in the endosomal/lysosomal compartments, exogenous antigens must compete with those derived from endogenous components. Autophagy is also a source of endogenous peptides, autophagosomes constitutively fuse with MHC class II loading compartments. In addition to APCs, other cells of the gastrointestinal tract, such as epithelial cells, express MHC class II molecules and CD74 and act as APCs, which is an unusual trait of the GI tract. To produce a MHC class II molecule that presents an antigen, three MHC class II molecules (heterodimers of an alpha and a beta chain) associate with a CD74 trimer in the ER to form a heterononamer. Soon after the entry of this complex into the endosomal/lysosomal system where antigen processing occurs, CD74 undergoes a sequential degradation by various proteases, including CTSS and CTSL, leaving a small fragment termed CLIP (class-II-associated invariant chain peptide). The removal of CLIP is facilitated by HLA-DM via direct binding to the alpha-beta-CLIP complex so that CLIP is released. HLA-DM stabilizes MHC class II molecules until primary high affinity antigenic peptides are bound. The MHC II molecule bound to a peptide is then transported to the cell membrane surface. In B-cells, the interaction between HLA-DM and MHC class II molecules is regulated by HLA-DO. Primary dendritic cells (DCs) also to express HLA-DO. Lysosomal microenvironment has been implicated in the regulation of antigen loading into MHC II molecules, increased acidification produces increased proteolysis and efficient peptide loading. This chain is HLA class II histocompatibility antigen, DR beta 5 chain, found in Homo sapiens (Human).